The following is a 368-amino-acid chain: Cytochrome b-c1 complex subunit 2, mitochondrial (368 aa).

A mitochondrion-targeting transit peptide spans 1–16; the sequence is MLSAARLQFAQGSVRR. Phosphoserine is present on residues S141 and S168.

The protein belongs to the peptidase M16 family. UQCRC2/QCR2 subfamily. In terms of assembly, component of the ubiquinol-cytochrome c oxidoreductase (cytochrome b-c1 complex, complex III, CIII), a multisubunit enzyme composed of 10 subunits. The complex is composed of 3 respiratory subunits cytochrome b (COB), cytochrome c1 (CYT1) and Rieske protein (RIP1), 2 core protein subunits COR1 and QCR2, and 5 low-molecular weight protein subunits QCR6, QCR7, QCR8, QCR9 and QCR10. The complex exists as an obligatory dimer and forms supercomplexes (SCs) in the inner mitochondrial membrane with a monomer or a dimer of cytochrome c oxidase (complex IV, CIV), resulting in 2 different assemblies (supercomplexes III(2)IV and III(2)IV(2)).

It localises to the mitochondrion inner membrane. Its function is as follows. Component of the ubiquinol-cytochrome c oxidoreductase, a multisubunit transmembrane complex that is part of the mitochondrial electron transport chain which drives oxidative phosphorylation. The respiratory chain contains 3 multisubunit complexes succinate dehydrogenase (complex II, CII), ubiquinol-cytochrome c oxidoreductase (cytochrome b-c1 complex, complex III, CIII) and cytochrome c oxidase (complex IV, CIV), that cooperate to transfer electrons derived from NADH and succinate to molecular oxygen, creating an electrochemical gradient over the inner membrane that drives transmembrane transport and the ATP synthase. The cytochrome b-c1 complex catalyzes electron transfer from ubiquinol to cytochrome c, linking this redox reaction to translocation of protons across the mitochondrial inner membrane, with protons being carried across the membrane as hydrogens on the quinol. In the process called Q cycle, 2 protons are consumed from the matrix, 4 protons are released into the intermembrane space and 2 electrons are passed to cytochrome c. This Saccharomyces cerevisiae (strain ATCC 204508 / S288c) (Baker's yeast) protein is Cytochrome b-c1 complex subunit 2, mitochondrial (QCR2).